The sequence spans 482 residues: Potential E3 ubiquitin-protein ligase ariadne-2 (482 aa).

The TRIAD supradomain stretch occupies residues 125–334; that stretch reads AKGYCSVCAM…SEYYECSRYK (210 aa). Residues C129, C132, C145, H147, C150, C153, C172, C177, C218, C223, C239, C242, C247, C250, H255, C260, C287, and C290 each coordinate Zn(2+). An RING-type 1 zinc finger spans residues 129–177; it reads CSVCAMDGYTELPHLTCGHCFCEHCWKSHVESRLSEGVASRIECMESEC. Residues 198–260 form an IBR-type zinc finger; that stretch reads LKYERFLLRD…GADYHAPTSC (63 aa). Residues 287-316 form an RING-type 2; atypical zinc finger; it reads CPQCHSCIEKAGGCNHIQCTRCRHHFCWMC. The active site involves C300. C305, C308, C313, C316, H323, and C330 together coordinate Zn(2+). A coiled-coil region spans residues 433–459; sequence FEYQQAQLEKEVEELAWAVERADGTAR.

This sequence belongs to the RBR family. Ariadne subfamily.

It localises to the nucleus. The catalysed reaction is [E2 ubiquitin-conjugating enzyme]-S-ubiquitinyl-L-cysteine + [acceptor protein]-L-lysine = [E2 ubiquitin-conjugating enzyme]-L-cysteine + [acceptor protein]-N(6)-ubiquitinyl-L-lysine.. Functionally, might act as an E3 ubiquitin-protein ligase, or as part of E3 complex, which accepts ubiquitin from specific E2 ubiquitin-conjugating enzymes, such as UBC-2/UBE2L3, and then transfers it to substrates. The polypeptide is Potential E3 ubiquitin-protein ligase ariadne-2 (Caenorhabditis elegans).